We begin with the raw amino-acid sequence, 335 residues long: Tryptophan--tRNA ligase (335 aa).

ATP is bound by residues 9–11 (QST) and 17–18 (GN). Positions 10–18 (STNSLTLGN) match the 'HIGH' region motif. Position 137 (D137) interacts with L-tryptophan. ATP-binding positions include 149–151 (GKD), I189, and 198–202 (KMSKS). The 'KMSKS' region motif lies at 198–202 (KMSKS).

It belongs to the class-I aminoacyl-tRNA synthetase family. In terms of assembly, homodimer.

The protein localises to the cytoplasm. It catalyses the reaction tRNA(Trp) + L-tryptophan + ATP = L-tryptophyl-tRNA(Trp) + AMP + diphosphate + H(+). Catalyzes the attachment of tryptophan to tRNA(Trp). This Malacoplasma penetrans (strain HF-2) (Mycoplasma penetrans) protein is Tryptophan--tRNA ligase.